Reading from the N-terminus, the 1241-residue chain is Putative ABC transporter B family member 8 (1241 aa).

The helical transmembrane segment at 24 to 44 threads the bilayer; the sequence is FADWIDIVLMVLGSVGAIGDG. An ABC transmembrane type-1 1 domain is found at 33–323; sequence MVLGSVGAIG…ALTEIRYFSE (291 aa). The N-linked (GlcNAc...) asparagine glycan is linked to Asn-48. Helical transmembrane passes span 82–102, 157–177, 183–203, 263–283, and 297–317; these read LYFV…GYCW, VPIF…SAYF, VVAI…GKYL, GLAV…AWYG, and IYAA…ALTE. Residues 360–596 enclose the ABC transporter 1 domain; that stretch reads VEFERVTLVY…NNHYAKLVKL (237 aa). 395 to 402 contacts ATP; sequence GASGSGKS. N-linked (GlcNAc...) asparagine glycans are attached at residues Asn-571, Asn-632, and Asn-648. In terms of domain architecture, ABC transmembrane type-1 2 spans 676-964; the sequence is SLVGCISATT…AGSMTSDLAK (289 aa). 2 consecutive transmembrane segments (helical) span residues 686–706 and 716–736; these read FGAI…AFFA and IHIY…LNLL. An N-linked (GlcNAc...) asparagine glycan is attached at Asn-773. 2 helical membrane-spanning segments follow: residues 797 to 815 and 821 to 838; these read ISLL…IIGL and LALV…CFYT. Residue Asn-855 is glycosylated (N-linked (GlcNAc...) asparagine). 2 consecutive transmembrane segments (helical) span residues 899 to 919 and 933 to 953; these read AWLA…TWAL and ISAG…KVIA. Residues 998–1236 enclose the ABC transporter 2 domain; that stretch reads IELKNIDFSY…GGQFSRLAHA (239 aa). An ATP-binding site is contributed by 1033 to 1040; the sequence is GTSGCGKS. N-linked (GlcNAc...) asparagine glycosylation is present at Asn-1187.

The protein belongs to the ABC transporter superfamily. ABCB family. Multidrug resistance exporter (TC 3.A.1.201) subfamily.

Its subcellular location is the membrane. The protein is Putative ABC transporter B family member 8 (ABCB8) of Arabidopsis thaliana (Mouse-ear cress).